The primary structure comprises 296 residues: Protoheme IX farnesyltransferase (296 aa).

Residues Met1–Val9 lie on the Cytoplasmic side of the membrane. Residues Thr10–Leu28 traverse the membrane as a helical segment. Topologically, residues Ala29–Pro37 are periplasmic. The chain crosses the membrane as a helical span at residues Leu38 to Phe56. At Asn57 to Lys78 the chain is on the cytoplasmic side. Residues Gly79–Gly97 form a helical membrane-spanning segment. Residues Phe98–Pro107 lie on the Periplasmic side of the membrane. The helical transmembrane segment at Leu108–Leu126 threads the bilayer. Residues Tyr127–Pro197 lie on the Cytoplasmic side of the membrane. The helical transmembrane segment at Val198–Phe216 threads the bilayer. Residues Ala217–Tyr228 lie on the Periplasmic side of the membrane. The chain crosses the membrane as a helical span at residues Ala229 to Met247. Topologically, residues Ala248–Ser268 are cytoplasmic. A helical transmembrane segment spans residues Ile269 to Asp287. Over Ser288–Trp296 the chain is Periplasmic.

This sequence belongs to the UbiA prenyltransferase family. Protoheme IX farnesyltransferase subfamily.

Its subcellular location is the cell inner membrane. The enzyme catalyses heme b + (2E,6E)-farnesyl diphosphate + H2O = Fe(II)-heme o + diphosphate. It participates in porphyrin-containing compound metabolism; heme O biosynthesis; heme O from protoheme: step 1/1. Converts heme B (protoheme IX) to heme O by substitution of the vinyl group on carbon 2 of heme B porphyrin ring with a hydroxyethyl farnesyl side group. This is Protoheme IX farnesyltransferase from Escherichia coli O1:K1 / APEC.